The chain runs to 351 residues: N-formyl peptide receptor 2 (351 aa).

At 1–27 (METNFSTPLNEYEEVSYESAGYTVLRI) the chain is on the extracellular side. N-linked (GlcNAc...) asparagine glycosylation is present at Asn4. A helical transmembrane segment spans residues 28–50 (LPLVVLGVTFVLGVLGNGLVIWV). The Cytoplasmic segment spans residues 51-61 (AGFRMTRTVTT). A helical transmembrane segment spans residues 62–83 (ICYLNLALADFSFTATLPFLIV). Residues 84–100 (SMAMGEKWPFGWFLCKL) lie on the Extracellular side of the membrane. Cys98 and Cys176 form a disulfide bridge. The helical transmembrane segment at 101 to 121 (IHIVVDINLFGSVFLIGFIAL) threads the bilayer. The Cytoplasmic segment spans residues 122–140 (DRCICVLHPVWAQNHRTVS). Residues 141-162 (LAMKVIVGPWILALVLTLPVFL) traverse the membrane as a helical segment. The Extracellular portion of the chain corresponds to 163–205 (FLTTVTIPNGDTYCTFNFASWGGTPEERLKVAITMLTARGIIR). The helical transmembrane segment at 206 to 226 (FVIGFSLPMSIVAICYGLIAA) threads the bilayer. Residues 227 to 242 (KIHKKGMIKSSRPLRV) are Cytoplasmic-facing. The chain crosses the membrane as a helical span at residues 243 to 266 (LTAVVASFFICWFPFQLVALLGTV). Topologically, residues 267 to 286 (WLKEMLFYGKYKIIDILVNP) are extracellular. A helical transmembrane segment spans residues 287–306 (TSSLAFFNSCLNPMLYVFVG). At 307 to 351 (QDFRERLIHSLPTSLERALSEDSAPTNDTAANSASPPAETELQAM) the chain is on the cytoplasmic side. The segment at 325–351 (LSEDSAPTNDTAANSASPPAETELQAM) is disordered. A compositionally biased stretch (polar residues) spans 329 to 341 (SAPTNDTAANSAS).

It belongs to the G-protein coupled receptor 1 family. In terms of assembly, interacts with Amyloid-beta protein 42, product of APP; the interaction takes place at the cell surface and the complex is then rapidly internalized. (Microbial infection) Interacts with Staphylococcus aureus protein SSL13; this interaction leads to the activation of neutrophils. Detected in lung, bone marrow, neutrophils, spleen and testis.

The protein localises to the cell membrane. Its function is as follows. Low affinity receptor for N-formyl-methionyl peptides, which are powerful neutrophil chemotactic factors. Binding of FMLP to the receptor causes activation of neutrophils. This response is mediated via a G-protein that activates a phosphatidylinositol-calcium second messenger system. The activation of LXA4R could result in an anti-inflammatory outcome counteracting the actions of pro-inflammatory signals such as LTB4 (leukotriene B4). Receptor for the chemokine-like protein FAM19A5, mediating FAM19A5-stimulated macrophage chemotaxis and the inhibitory effect on TNFSF11/RANKL-induced osteoclast differentiation. Acts as a receptor for humanin. The sequence is that of N-formyl peptide receptor 2 (FPR2) from Homo sapiens (Human).